The primary structure comprises 196 residues: Glycerol-3-phosphate acyltransferase (196 aa).

5 helical membrane-spanning segments follow: residues 2–22, 51–71, 80–100, 112–132, and 137–156; these read GWWLFPILGYFIGSIPFSYLI, VVGGICLLLDALKGFFPVFIA, LVSLTAIATVLGHDFPIFMKF, IIFCLSWPTGIVFTLTWLVIV, and YASLGSLVALYISALLGYLF.

It belongs to the PlsY family. Probably interacts with PlsX.

It localises to the cell inner membrane. It catalyses the reaction an acyl phosphate + sn-glycerol 3-phosphate = a 1-acyl-sn-glycero-3-phosphate + phosphate. It participates in lipid metabolism; phospholipid metabolism. Functionally, catalyzes the transfer of an acyl group from acyl-phosphate (acyl-PO(4)) to glycerol-3-phosphate (G3P) to form lysophosphatidic acid (LPA). This enzyme utilizes acyl-phosphate as fatty acyl donor, but not acyl-CoA or acyl-ACP. This is Glycerol-3-phosphate acyltransferase from Thermotoga petrophila (strain ATCC BAA-488 / DSM 13995 / JCM 10881 / RKU-1).